The sequence spans 79 residues: Sec-independent protein translocase protein TatA (79 aa).

Residues 1–21 form a helical membrane-spanning segment; the sequence is MGGISIWQLLIIALIVILLFG. The disordered stretch occupies residues 42 to 79; that stretch reads AMTSETSEEEKKALEDSQTAQTSQQAEKKPESKDKEQA. Over residues 57-66 the composition is skewed to polar residues; it reads DSQTAQTSQQ. Residues 67-79 are compositionally biased toward basic and acidic residues; the sequence is AEKKPESKDKEQA.

It belongs to the TatA/E family. As to quaternary structure, the Tat system comprises two distinct complexes: a TatABC complex, containing multiple copies of TatA, TatB and TatC subunits, and a separate TatA complex, containing only TatA subunits. Substrates initially bind to the TatABC complex, which probably triggers association of the separate TatA complex to form the active translocon.

It is found in the cell inner membrane. In terms of biological role, part of the twin-arginine translocation (Tat) system that transports large folded proteins containing a characteristic twin-arginine motif in their signal peptide across membranes. TatA could form the protein-conducting channel of the Tat system. The protein is Sec-independent protein translocase protein TatA of Shewanella denitrificans (strain OS217 / ATCC BAA-1090 / DSM 15013).